A 266-amino-acid chain; its full sequence is MPAPENRFKTAIHAGKPQIGLWLDMGEAITAEIAGTAGFDWLVIDGEHGPNDLRSIIDQLRALATSPAEPVVRVPVGESWMIKQLLDAGARTLLVPMVDSAEQASDLVSAMHYPPRGIRGMGAAVARASAFNTIADYADSASDGVCLLVQAETRAAINDLDNILAVEGVDGVFIGPADLAADMGYLGRIDEPEVQAVIEAAIVKIVAAGKAAGILTFNEAYNRRYLELGASFVAVGADVTEFANTLRALSARYKGGSAPQPSRSGY.

The active-site Proton acceptor is His48. Glu152 and Asp178 together coordinate a divalent metal cation.

This sequence belongs to the HpcH/HpaI aldolase family. A divalent metal cation is required as a cofactor.

The catalysed reaction is D-glyceraldehyde + pyruvate = 2-dehydro-3-deoxy-L-galactonate. It catalyses the reaction 2-dehydro-3-deoxy-D-gluconate = D-glyceraldehyde + pyruvate. In terms of biological role, aldolase which can catalyze in vitro the aldolisation reaction between hydroxypyruvate (HPA) or pyruvate (PA) and D-glyceraldehyde (D-GA). The condensation of pyruvate and D-glyceraldehyde produces 2-dehydro-3-deoxy-L-galactonate as the major product and 2-dehydro-3-deoxy-D-gluconate. Has weak activity with hydroxypyruvate and D-glyceraldehyde. The protein is Hydroxypyruvate/pyruvate aldolase of Agrobacterium fabrum (strain C58 / ATCC 33970) (Agrobacterium tumefaciens (strain C58)).